Reading from the N-terminus, the 105-residue chain is Protein RALF-like 21 (105 aa).

The first 30 residues, 1 to 30, serve as a signal peptide directing secretion; that stretch reads MSNMKITNRFMLVATFIACVFISSMNMTVG. Cystine bridges form between Cys-44–Cys-53 and Cys-67–Cys-73.

It belongs to the plant rapid alkalinization factor (RALF) family. Expressed in seeds and rosettes.

Its subcellular location is the secreted. In terms of biological role, cell signaling peptide that may regulate plant stress, growth, and development. Mediates a rapid alkalinization of extracellular space by mediating a transient increase in the cytoplasmic Ca(2+) concentration leading to a calcium-dependent signaling events through a cell surface receptor and a concomitant activation of some intracellular mitogen-activated protein kinases. This chain is Protein RALF-like 21 (RALFL21), found in Arabidopsis thaliana (Mouse-ear cress).